Consider the following 769-residue polypeptide: Sensor protein DivL (769 aa).

The helical transmembrane segment at 6–26 (LILAAAAGAVCLAISVALWSH) threads the bilayer. Residues 547–758 (NVSYELRTPL…TFTCHLPETQ (212 aa)) form the Histidine kinase domain. A Phosphotyrosine; by autocatalysis modification is found at Tyr550.

Autophosphorylated.

The protein localises to the cell membrane. The catalysed reaction is ATP + protein L-histidine = ADP + protein N-phospho-L-histidine.. Required for cell division and growth. It catalyzes the phosphorylation of CtrA and activates transcription in vitro of the cell cycle-regulated fliF promoter. The chain is Sensor protein DivL (divL) from Caulobacter vibrioides (strain ATCC 19089 / CIP 103742 / CB 15) (Caulobacter crescentus).